We begin with the raw amino-acid sequence, 321 residues long: Methionyl-tRNA formyltransferase (321 aa).

Position 112–115 (112–115) interacts with (6S)-5,6,7,8-tetrahydrofolate; that stretch reads SILP.

The protein belongs to the Fmt family.

It carries out the reaction L-methionyl-tRNA(fMet) + (6R)-10-formyltetrahydrofolate = N-formyl-L-methionyl-tRNA(fMet) + (6S)-5,6,7,8-tetrahydrofolate + H(+). In terms of biological role, attaches a formyl group to the free amino group of methionyl-tRNA(fMet). The formyl group appears to play a dual role in the initiator identity of N-formylmethionyl-tRNA by promoting its recognition by IF2 and preventing the misappropriation of this tRNA by the elongation apparatus. The chain is Methionyl-tRNA formyltransferase from Shewanella pealeana (strain ATCC 700345 / ANG-SQ1).